The chain runs to 251 residues: Tryptophan synthase alpha chain (251 aa).

Active-site proton acceptor residues include glutamate 46 and aspartate 57.

The protein belongs to the TrpA family. Tetramer of two alpha and two beta chains.

It catalyses the reaction (1S,2R)-1-C-(indol-3-yl)glycerol 3-phosphate + L-serine = D-glyceraldehyde 3-phosphate + L-tryptophan + H2O. It functions in the pathway amino-acid biosynthesis; L-tryptophan biosynthesis; L-tryptophan from chorismate: step 5/5. In terms of biological role, the alpha subunit is responsible for the aldol cleavage of indoleglycerol phosphate to indole and glyceraldehyde 3-phosphate. The chain is Tryptophan synthase alpha chain from Karelsulcia muelleri (strain GWSS) (Sulcia muelleri).